Consider the following 31-residue polypeptide: Palustrin-2a (31 aa).

Cysteine 23 and cysteine 29 are joined by a disulfide.

As to expression, expressed by the skin glands.

The protein resides in the secreted. In terms of biological role, antimicrobial activity against Gram-negative bacterium E.coli. The sequence is that of Palustrin-2a from Lithobates palustris (Pickerel frog).